The following is a 116-amino-acid chain: UPF0342 protein lhv_1666 (116 aa).

It belongs to the UPF0342 family.

The polypeptide is UPF0342 protein lhv_1666 (Lactobacillus helveticus (strain DPC 4571)).